The following is a 940-amino-acid chain: Fibronectin-binding protein B (940 aa).

A signal peptide spans 1–36 (MKSNLRYGIRKHKLGAASVFLGTMIVVGMGQEKEAA). A disordered region spans residues 36-111 (AASEQNNTTV…PKVETSRVDL (76 aa)). Residues 38 to 92 (SEQNNTTVEESGSSATESKASETQTTTNNVNTIDETQSYSATSTEQPSQSTQVTT) show a composition bias toward polar residues. A fibrinogen/elastin/tropoelastin-binding region spans residues 162-480 (TGTDVTNKVE…AQGDGKDKLK (319 aa)). Disordered stretches follow at residues 676 to 746 (LGYE…NIID), 764 to 878 (IIEE…GKVV), and 892 to 918 (VPTKKAQSKKSELPETGGEESTNNGML). Residues 681–718 (GQNSGNQSFEEDTEEDKPKYEQGGNIVDIDFDSVPQIH) form a D-1 repeat. The D-2 repeat unit spans residues 719 to 756 (GQNNGNQSFEEDTEKDKPKYEQGGNIIDIDFDSVPHIH). One copy of the D-3 repeat lies at 757–795 (GFNKHTEIIEEDTNKDKPNYQFGGHNSVDFEEDTLPQVS). Over residues 764 to 774 (IIEEDTNKDKP) the composition is skewed to basic and acidic residues. A compositionally biased stretch (polar residues) spans 792 to 802 (PQVSGHNEGQQ). The D-4; truncated repeat unit spans residues 796 to 814 (GHNEGQQTIEEDTTPPIVP). The segment covering 811–860 (PIVPPTPPTPEVPSEPETPTPPTPEVPSEPETPTPPTPEVPTEPGKPIPP) has biased composition (pro residues). 3 WR repeats span residues 815-828 (PTPPTPEVPSEPET), 829-842 (PTPPTPEVPSEPET), and 857-870 (PIPPAKEEPKKPSK). An LPXTG sorting signal motif is present at residues 904-908 (LPETG). T907 is subject to Pentaglycyl murein peptidoglycan amidated threonine. Residues 908 to 940 (GGEESTNNGMLFGGLFSILGLALLRRNKKNHKA) constitute a propeptide, removed by sortase.

In terms of assembly, interacts with host PLG; this interaction provides active plasmin on the surface of bacteria cells. Interacts with host histones.

The protein localises to the secreted. Its subcellular location is the cell wall. Functionally, multifunctional protein which promotes bacterial attachment to fibrinogen, elastin and fibronectin. Also promotes the accumulation phase and the primary attachment phase of biofilm formation. In addition, protects against the antimicrobial activity of histones. Mechanistically, captures histones and prevents them from reaching the bacterial membrane and simultaneously binds plasminogen, thereby promoting its conversion to plasmin to destroy the bound histones. In Staphylococcus aureus (strain USA300), this protein is Fibronectin-binding protein B.